The following is a 401-amino-acid chain: Formate-dependent phosphoribosylglycinamide formyltransferase (401 aa).

N(1)-(5-phospho-beta-D-ribosyl)glycinamide is bound by residues 22–23 (EL) and glutamate 82. ATP-binding positions include arginine 115, lysine 157, 162–167 (SSGKGQ), 197–200 (EGFI), and glutamate 205. Residues 120–315 (RLAAESLGLP…EFELHARAIL (196 aa)) enclose the ATP-grasp domain. Positions 274 and 286 each coordinate Mg(2+). Residues aspartate 293, lysine 362, and 369-370 (RR) each bind N(1)-(5-phospho-beta-D-ribosyl)glycinamide.

This sequence belongs to the PurK/PurT family. Homodimer.

It carries out the reaction N(1)-(5-phospho-beta-D-ribosyl)glycinamide + formate + ATP = N(2)-formyl-N(1)-(5-phospho-beta-D-ribosyl)glycinamide + ADP + phosphate + H(+). Its pathway is purine metabolism; IMP biosynthesis via de novo pathway; N(2)-formyl-N(1)-(5-phospho-D-ribosyl)glycinamide from N(1)-(5-phospho-D-ribosyl)glycinamide (formate route): step 1/1. In terms of biological role, involved in the de novo purine biosynthesis. Catalyzes the transfer of formate to 5-phospho-ribosyl-glycinamide (GAR), producing 5-phospho-ribosyl-N-formylglycinamide (FGAR). Formate is provided by PurU via hydrolysis of 10-formyl-tetrahydrofolate. The polypeptide is Formate-dependent phosphoribosylglycinamide formyltransferase (Cupriavidus taiwanensis (strain DSM 17343 / BCRC 17206 / CCUG 44338 / CIP 107171 / LMG 19424 / R1) (Ralstonia taiwanensis (strain LMG 19424))).